The following is a 513-amino-acid chain: ATP synthase subunit alpha (513 aa).

169–176 (GDRQTGKS) provides a ligand contact to ATP.

The protein belongs to the ATPase alpha/beta chains family. As to quaternary structure, F-type ATPases have 2 components, CF(1) - the catalytic core - and CF(0) - the membrane proton channel. CF(1) has five subunits: alpha(3), beta(3), gamma(1), delta(1), epsilon(1). CF(0) has three main subunits: a(1), b(2) and c(9-12). The alpha and beta chains form an alternating ring which encloses part of the gamma chain. CF(1) is attached to CF(0) by a central stalk formed by the gamma and epsilon chains, while a peripheral stalk is formed by the delta and b chains.

The protein localises to the cell membrane. It catalyses the reaction ATP + H2O + 4 H(+)(in) = ADP + phosphate + 5 H(+)(out). In terms of biological role, produces ATP from ADP in the presence of a proton gradient across the membrane. The alpha chain is a regulatory subunit. The protein is ATP synthase subunit alpha of Baumannia cicadellinicola subsp. Homalodisca coagulata.